Consider the following 772-residue polypeptide: Phenylalanine--tRNA ligase beta subunit (772 aa).

In terms of domain architecture, tRNA-binding spans 40-158 (IKPSTNLVFA…DHYKTPNQIF (119 aa)). Residues 397-468 (SVHNVIKNKI…KKISIQEIKP (72 aa)) form the B5 domain. Residues Asp446, Asp452, Glu455, and Asp456 each contribute to the Mg(2+) site. Positions 691–772 (SMYHDVIRDI…QEVNNYLKQF (82 aa)) constitute an FDX-ACB domain.

The protein belongs to the phenylalanyl-tRNA synthetase beta subunit family. Type 1 subfamily. In terms of assembly, tetramer of two alpha and two beta subunits. Requires Mg(2+) as cofactor.

The protein resides in the cytoplasm. The enzyme catalyses tRNA(Phe) + L-phenylalanine + ATP = L-phenylalanyl-tRNA(Phe) + AMP + diphosphate + H(+). The sequence is that of Phenylalanine--tRNA ligase beta subunit (pheT) from Ureaplasma parvum serovar 3 (strain ATCC 700970).